The chain runs to 415 residues: uncharacterized protein (415 aa).

The [4Fe-4S] cluster site is built by Cys85, Cys91, Cys94, and Cys175. S-adenosyl-L-methionine contacts are provided by Gln248, Tyr276, Glu297, and Asn344. Cys371 functions as the Nucleophile in the catalytic mechanism.

The protein belongs to the class I-like SAM-binding methyltransferase superfamily. RNA M5U methyltransferase family.

This is an uncharacterized protein from Leptospira interrogans serogroup Icterohaemorrhagiae serovar Lai (strain 56601).